Here is a 299-residue protein sequence, read N- to C-terminus: MSESPDLSQIAPTLKAEILAEALPYIRQYHGKTVVIKYGGNAMTEERLKQGFARDVILLKLVGINPVIVHGGGPQIDQALKKIGKQGTFIQGMRVTDEETMEVVEWVLGGEVQQDIVTLINHFGGHAVGLTGKDGGLIHARKLLMPDRDNPGQYIDIGQVGEVEAINPAVVKALQDDAFIPVISPIGFGEDGLSYNINADLVAGKLAVVLNAEKLVMMTNIPGVMDKEGTLLTDLSAREIDALFADGTISGGMLPKISSALDAAKSGVRSVHIIDGRIEHSVLLEILTEQPFGTMIRSH.

Substrate contacts are provided by residues 72–73 (GG), R94, and N196.

Belongs to the acetylglutamate kinase family. ArgB subfamily.

It localises to the cytoplasm. The enzyme catalyses N-acetyl-L-glutamate + ATP = N-acetyl-L-glutamyl 5-phosphate + ADP. It functions in the pathway amino-acid biosynthesis; L-arginine biosynthesis; N(2)-acetyl-L-ornithine from L-glutamate: step 2/4. Its function is as follows. Catalyzes the ATP-dependent phosphorylation of N-acetyl-L-glutamate. This Paraburkholderia phymatum (strain DSM 17167 / CIP 108236 / LMG 21445 / STM815) (Burkholderia phymatum) protein is Acetylglutamate kinase.